The sequence spans 156 residues: Keratin, high-sulfur matrix protein, B2B (156 aa).

The residue at position 1 (Ala-1) is an N-acetylalanine. 4 consecutive repeats follow at residues 26–35 (PTCSQTSCCQ), 36–45 (PTSIQTSCCQ), 46–55 (PISIQTSCCQ), and 56–65 (PTCLQTSGCE).

In terms of biological role, the keratin products of mammalian epidermal derivatives such as wool and hair consist of microfibrils embedded in a rigid matrix of other proteins. The matrix proteins include the high-sulfur and high-tyrosine keratins, having molecular weights of 6-20 kDa, whereas the microfibrils contain the larger, low-sulfur keratins (40-56 kDa). The sequence is that of Keratin, high-sulfur matrix protein, B2B from Ovis aries (Sheep).